The sequence spans 96 residues: Co-chaperonin GroES (96 aa).

It belongs to the GroES chaperonin family. In terms of assembly, heptamer of 7 subunits arranged in a ring. Interacts with the chaperonin GroEL.

The protein localises to the cytoplasm. Functionally, together with the chaperonin GroEL, plays an essential role in assisting protein folding. The GroEL-GroES system forms a nano-cage that allows encapsulation of the non-native substrate proteins and provides a physical environment optimized to promote and accelerate protein folding. GroES binds to the apical surface of the GroEL ring, thereby capping the opening of the GroEL channel. The polypeptide is Co-chaperonin GroES (Acinetobacter baylyi (strain ATCC 33305 / BD413 / ADP1)).